Here is a 338-residue protein sequence, read N- to C-terminus: Methionine synthase (338 aa).

Zn(2+) contacts are provided by His210, Cys212, Glu234, and Cys294.

It belongs to the archaeal MetE family. Zn(2+) is required as a cofactor.

It participates in amino-acid biosynthesis; L-methionine biosynthesis via de novo pathway. Functionally, catalyzes the transfer of a methyl group to L-homocysteine resulting in methionine formation. The physiological methyl donor is unknown. This is Methionine synthase from Pyrococcus abyssi (strain GE5 / Orsay).